The chain runs to 156 residues: MQLLIVAVGHKMPRWIEDGFAEYAKRMPPELRIELREIKPEQRSGSRTAATVMQLEAARIEAALPKGCRIVALDERGKDLTTAALADALTGWQREGGDVALIIGGADGLDPALKARAHMLMRLSSLTLPHGMVRVLLAEQLYRAWSITQNHPYHRV.

Residues L73, G104, and 123–128 (LSSLTL) contribute to the S-adenosyl-L-methionine site.

The protein belongs to the RNA methyltransferase RlmH family. Homodimer.

It is found in the cytoplasm. The catalysed reaction is pseudouridine(1915) in 23S rRNA + S-adenosyl-L-methionine = N(3)-methylpseudouridine(1915) in 23S rRNA + S-adenosyl-L-homocysteine + H(+). Specifically methylates the pseudouridine at position 1915 (m3Psi1915) in 23S rRNA. In Ralstonia nicotianae (strain ATCC BAA-1114 / GMI1000) (Ralstonia solanacearum), this protein is Ribosomal RNA large subunit methyltransferase H.